A 99-amino-acid polypeptide reads, in one-letter code: Protein AC150 (99 aa).

One can recognise a Chitin-binding type-2 domain in the interval 38–96 (GFSCYNKPIGVNFPHPTRCDAFYMCVGLNQKLELICPEGFEFDPDVKNCVPISDYGCTA). Residues C73 and C86 are joined by a disulfide bond.

The protein resides in the host nucleus. Its subcellular location is the virion. In terms of biological role, plays a role in primary oral infection of the host. The chain is Protein AC150 from Autographa californica nuclear polyhedrosis virus (AcMNPV).